We begin with the raw amino-acid sequence, 110 residues long: Iron-sulfur cluster assembly protein CyaY (110 aa).

It belongs to the frataxin family.

Functionally, involved in iron-sulfur (Fe-S) cluster assembly. May act as a regulator of Fe-S biogenesis. This chain is Iron-sulfur cluster assembly protein CyaY, found in Pseudomonas fluorescens (strain ATCC BAA-477 / NRRL B-23932 / Pf-5).